A 191-amino-acid polypeptide reads, in one-letter code: Putative zinc metalloprotease MJ0611 (191 aa).

The helical transmembrane segment at 20–40 (AIAFIFSYPNFSILVFIISLI) threads the bilayer. H49 is a Zn(2+) binding site. E50 is an active-site residue. H53 contacts Zn(2+). Helical transmembrane passes span 73–93 (LILG…PGAV), 110–130 (LAGP…MLIF), 133–153 (GSLL…LAGF), and 171–191 (PFIW…MMFW).

Belongs to the peptidase M50B family. The cofactor is Zn(2+).

The protein localises to the cell membrane. This Methanocaldococcus jannaschii (strain ATCC 43067 / DSM 2661 / JAL-1 / JCM 10045 / NBRC 100440) (Methanococcus jannaschii) protein is Putative zinc metalloprotease MJ0611.